Here is a 421-residue protein sequence, read N- to C-terminus: Acetate kinase (421 aa).

Asn-7 is a Mg(2+) binding site. ATP is bound at residue Lys-14. Arg-91 is a substrate binding site. Asp-148 functions as the Proton donor/acceptor in the catalytic mechanism. ATP-binding positions include 208 to 212 (HIGNG) and 283 to 285 (DRR). Residue Glu-387 coordinates Mg(2+).

The protein belongs to the acetokinase family. Homodimer. Mg(2+) is required as a cofactor. It depends on Mn(2+) as a cofactor.

The protein localises to the cytoplasm. The enzyme catalyses acetate + ATP = acetyl phosphate + ADP. It participates in metabolic intermediate biosynthesis; acetyl-CoA biosynthesis; acetyl-CoA from acetate: step 1/2. In terms of biological role, catalyzes the formation of acetyl phosphate from acetate and ATP. Can also catalyze the reverse reaction. This is Acetate kinase from Geobacter metallireducens (strain ATCC 53774 / DSM 7210 / GS-15).